The following is a 421-amino-acid chain: Serine hydroxymethyltransferase (421 aa).

(6S)-5,6,7,8-tetrahydrofolate is bound by residues leucine 121 and 125–127; that span reads GHL. Lysine 230 is subject to N6-(pyridoxal phosphate)lysine. (6S)-5,6,7,8-tetrahydrofolate is bound at residue 355-357; sequence SPF.

The protein belongs to the SHMT family. As to quaternary structure, homodimer. Pyridoxal 5'-phosphate serves as cofactor.

It is found in the cytoplasm. It catalyses the reaction (6R)-5,10-methylene-5,6,7,8-tetrahydrofolate + glycine + H2O = (6S)-5,6,7,8-tetrahydrofolate + L-serine. The protein operates within one-carbon metabolism; tetrahydrofolate interconversion. It participates in amino-acid biosynthesis; glycine biosynthesis; glycine from L-serine: step 1/1. Functionally, catalyzes the reversible interconversion of serine and glycine with tetrahydrofolate (THF) serving as the one-carbon carrier. This reaction serves as the major source of one-carbon groups required for the biosynthesis of purines, thymidylate, methionine, and other important biomolecules. Also exhibits THF-independent aldolase activity toward beta-hydroxyamino acids, producing glycine and aldehydes, via a retro-aldol mechanism. The protein is Serine hydroxymethyltransferase of Psychromonas ingrahamii (strain DSM 17664 / CCUG 51855 / 37).